We begin with the raw amino-acid sequence, 72 residues long: uncharacterized protein (72 aa).

The helical transmembrane segment at 33–53 threads the bilayer; sequence VCIFFSLIFFFFFFFFCVNWG.

The protein resides in the membrane. This is an uncharacterized protein from Dictyostelium discoideum (Social amoeba).